A 103-amino-acid chain; its full sequence is MLIKTGDKVRVISGKDRGQEGTVKKVISAKNRIVVEGVNKIKKHQKPTNVNPQGGIVDIEAPIDASNVMYLDPSTNEPTRLGVRREDGKRVRYAKKSGKDLEN.

The interval 70–103 is disordered; sequence YLDPSTNEPTRLGVRREDGKRVRYAKKSGKDLEN.

It belongs to the universal ribosomal protein uL24 family. In terms of assembly, part of the 50S ribosomal subunit.

Functionally, one of two assembly initiator proteins, it binds directly to the 5'-end of the 23S rRNA, where it nucleates assembly of the 50S subunit. Its function is as follows. One of the proteins that surrounds the polypeptide exit tunnel on the outside of the subunit. The protein is Large ribosomal subunit protein uL24 of Lactiplantibacillus plantarum (strain ATCC BAA-793 / NCIMB 8826 / WCFS1) (Lactobacillus plantarum).